A 622-amino-acid polypeptide reads, in one-letter code: Low affinity potassium transport system protein Kup (622 aa).

The next 12 membrane-spanning stretches (helical) occupy residues 9-29, 46-66, 101-121, 137-157, 165-185, 213-233, 247-267, 276-296, 337-357, 363-383, 395-415, and 416-436; these read LSAVTLAAIGVVYGDIGTSPL, PDVVFGFLSLIFWMLILVVSV, ILVVLGLIGGSFFYGEVVITP, PALDPYIVPCSIAVLTLLFVI, VGKLFAPVMLVWFLTLALLGL, VSFFALGAVVLAITGVEALYA, WFTVVLPSLVLNYFGQGALLL, PFFLLAPDWALIPLLILATLA, IYIPVINWTLYLAVVLVIIGF, LAAAYGIAVTGTMVITSILFC, FLVAFLLMVLLIIDIPMFSAN, and VLKLFSGGWLPLSLGLVMFII.

It belongs to the HAK/KUP transporter (TC 2.A.72) family.

It localises to the cell inner membrane. The enzyme catalyses K(+)(in) + H(+)(in) = K(+)(out) + H(+)(out). In terms of biological role, responsible for the low-affinity transport of potassium into the cell. Likely operates as a K(+):H(+) symporter. The polypeptide is Low affinity potassium transport system protein Kup (Yersinia pseudotuberculosis serotype O:1b (strain IP 31758)).